The sequence spans 448 residues: Probable alpha-galactosidase B (448 aa).

The first 23 residues, 1-23, serve as a signal peptide directing secretion; sequence MSRFHLPLAAAVVLVSCLWSANA. 2 disulfides stabilise this stretch: Cys-46–Cys-78 and Cys-128–Cys-158. Catalysis depends on Asp-156, which acts as the Nucleophile. 2 N-linked (GlcNAc...) asparagine glycosylation sites follow: Asn-163 and Asn-181. Residue 226 to 230 participates in substrate binding; that stretch reads EWGQA. Asn-237 is a glycosylation site (N-linked (GlcNAc...) asparagine). The active-site Proton donor is Asp-248.

Belongs to the glycosyl hydrolase 27 family.

The protein resides in the secreted. The enzyme catalyses Hydrolysis of terminal, non-reducing alpha-D-galactose residues in alpha-D-galactosides, including galactose oligosaccharides, galactomannans and galactolipids.. In terms of biological role, hydrolyzes a variety of simple alpha-D-galactoside as well as more complex molecules such as oligosaccharides and polysaccharides. The protein is Probable alpha-galactosidase B (aglB) of Aspergillus clavatus (strain ATCC 1007 / CBS 513.65 / DSM 816 / NCTC 3887 / NRRL 1 / QM 1276 / 107).